Consider the following 252-residue polypeptide: Type II secretion system protein N (252 aa).

Over methionine 1–alanine 4 the chain is Cytoplasmic. A helical membrane pass occupies residues valine 5–alanine 25. Over glutamine 26–leucine 252 the chain is Periplasmic.

It belongs to the GSP N family.

It is found in the cell inner membrane. Its function is as follows. Involved in a type II secretion system (T2SS, formerly general secretion pathway, GSP) for the export of proteins. Required for secretion of cholera toxin through the outer membrane. This chain is Type II secretion system protein N (epsN), found in Vibrio cholerae serotype O1 (strain ATCC 39315 / El Tor Inaba N16961).